A 3364-amino-acid chain; its full sequence is Salivary gland surface protein 1 (3364 aa).

Beta-propeller stretches follow at residues 1 to 344 and 705 to 1216; these read MLRI…VVDA and FEQE…LKAL. The N-linked (GlcNAc...) asparagine glycan is linked to Asn59. 2 disulfide bridges follow: Cys251/Cys297 and Cys1128/Cys1139. The rhs/YD-repeats stretch occupies residues 345–2733; that stretch reads VEPKLDQGSP…PVSQIDPDGQ (2389 aa). The N-linked (GlcNAc...) asparagine glycan is linked to Asn1149. The segment at 1345-1494 is carbohydrate-binding module (CBM); sequence NQELVQFLGF…VHVDHVRLSP (150 aa). Positions 1575–1715 are lectin carbohydrate-recognition domain (lectin-CRD); that stretch reads HSWVESFSPY…VGIKDVIVME (141 aa). Positions 2225–2304 are wedge domain; the sequence is HDKCDQNLIP…SEKMLEQGYP (80 aa). Cystine bridges form between Cys2253/Cys2285 and Cys2407/Cys2421. 5 helical membrane passes run 2734-2754, 2774-2794, 2805-2825, 2844-2864, and 2878-2898; these read IAVTLVLMIIGAIVGAYLGAA, IGLFAGAIMGAFAVYGGAATF, MIAGALATGVISVAGAFLGAA, WNGLLSGASIAVSFPSGFVGI, and MIYASLMVGGFLLFVYLGGGM. The tract at residues 3126 to 3216 is tox-SGS; it reads YSPDSDGNQI…ARIAPAALRN (91 aa).

Probably cleaved at the C-terminus. As to expression, female saliva (at protein level). Female salivary gland (at protein level). Not detected in female carcass without salivary glands. Not detected in male tissues.

It is found in the cell membrane. Its subcellular location is the secreted. Functionally, (Microbial infection) Facilitates, but is not essential for, invasion of salivary glands by Plasmodium gallinaceum. Plays a role in Plasmodium gallinaceum oocyst development in mosquito midgut. In terms of biological role, (Microbial infection) Probably facilitates Zika virus replication in salivary glands. The sequence is that of Salivary gland surface protein 1 from Aedes aegypti (Yellowfever mosquito).